The following is a 340-amino-acid chain: Methionine import ATP-binding protein MetN 1 (340 aa).

One can recognise an ABC transporter domain in the interval 2-242 (IRLENVSVDF…PQHAYTKQLV (241 aa)). 39 to 46 (GTSGAGKS) serves as a coordination point for ATP.

It belongs to the ABC transporter superfamily. Methionine importer (TC 3.A.1.24) family. As to quaternary structure, the complex is composed of two ATP-binding proteins (MetN), two transmembrane proteins (MetI) and a solute-binding protein (MetQ).

The protein resides in the cell inner membrane. It catalyses the reaction L-methionine(out) + ATP + H2O = L-methionine(in) + ADP + phosphate + H(+). It carries out the reaction D-methionine(out) + ATP + H2O = D-methionine(in) + ADP + phosphate + H(+). Part of the ABC transporter complex MetNIQ involved in methionine import. Responsible for energy coupling to the transport system. This Pectobacterium atrosepticum (strain SCRI 1043 / ATCC BAA-672) (Erwinia carotovora subsp. atroseptica) protein is Methionine import ATP-binding protein MetN 1.